The sequence spans 156 residues: Acyl carrier protein, mitochondrial (156 aa).

Residues 1-68 constitute a mitochondrion transit peptide; the sequence is MASRVLCACV…GTVTHLCRQY (68 aa). The 76-residue stretch at 77–152 folds into the Carrier domain; that stretch reads DGIKDRVLYV…EIVDYIADKK (76 aa). An N6-acetyllysine modification is found at K88. Residue S112 is modified to O-(pantetheine 4'-phosphoryl)serine.

It belongs to the acyl carrier protein (ACP) family. As to quaternary structure, mammalian complex I is composed of 45 different subunits. Interacts with ETFRF1. Identified in a complex composed of MALSU1, MIEF1 upstream open reading frame protein and NDUFAB1; within the trimeric complex, MIEF1 upstream open reading frame protein functions as a bridging scaffold that interacts with MALSU1 on one side, and with NDUFAB1 on the other side. The complex interacts with the mitochondrial large ribosomal subunit. Interacts with alpha-1-microglobulin chain; this interaction is required for the maintenance of mitochondrial redox homeostasis. Component of the mitochondrial core iron-sulfur cluster (ISC) complex composed of NFS1, LYRM4, NDUFAB1, ISCU, FXN, and FDX2; this complex is a heterohexamer containing two copies of each monomer. Component of the cyteine desulfurase complex composed of NFS1, LYRM4 and NDUFAB1; this complex contributes to the stability and cysteine desulfurase activity of NFS1. Phosphopantetheinylation at Ser-112 is essential for interactions with LYR motif-containing proteins.

Its subcellular location is the mitochondrion. Carrier of the growing fatty acid chain in fatty acid biosynthesis. Accessory and non-catalytic subunit of the mitochondrial membrane respiratory chain NADH dehydrogenase (Complex I), which functions in the transfer of electrons from NADH to the respiratory chain. Accessory protein, of the core iron-sulfur cluster (ISC) assembly complex, that regulates, in association with LYRM4, the stability and the cysteine desulfurase activity of NFS1 and participates in the [2Fe-2S] clusters assembly on the scaffolding protein ISCU. The core iron-sulfur cluster (ISC) assembly complex is involved in the de novo synthesis of a [2Fe-2S] cluster, the first step of the mitochondrial iron-sulfur protein biogenesis. This process is initiated by the cysteine desulfurase complex (NFS1:LYRM4:NDUFAB1) that produces persulfide which is delivered on the scaffold protein ISCU in a FXN-dependent manner. Then this complex is stabilized by FDX2 which provides reducing equivalents to accomplish the [2Fe-2S] cluster assembly. Finally, the [2Fe-2S] cluster is transferred from ISCU to chaperone proteins, including HSCB, HSPA9 and GLRX5. In Mus musculus (Mouse), this protein is Acyl carrier protein, mitochondrial.